The following is an 89-amino-acid chain: Small ribosomal subunit protein uS15 (89 aa).

The protein belongs to the universal ribosomal protein uS15 family. As to quaternary structure, part of the 30S ribosomal subunit. Forms a bridge to the 50S subunit in the 70S ribosome, contacting the 23S rRNA.

Functionally, one of the primary rRNA binding proteins, it binds directly to 16S rRNA where it helps nucleate assembly of the platform of the 30S subunit by binding and bridging several RNA helices of the 16S rRNA. In terms of biological role, forms an intersubunit bridge (bridge B4) with the 23S rRNA of the 50S subunit in the ribosome. In Pelotomaculum thermopropionicum (strain DSM 13744 / JCM 10971 / SI), this protein is Small ribosomal subunit protein uS15.